The chain runs to 2443 residues: MVSAIEPIAIVGTGCRFPGNCSSSARLWELLRSPQNVASKVPADRFNVDAFYHPDGTHHGTTNVKEGYFLKEDVRAFDASFFNISPTEAASMDPQQRLLLETVYESLESAGLQMEALQGSSTGVFCGFLRNDYSQIQTTDRDALPAYMVTGNSPSIMANRVSYFFDWKGPSFGMDTGCSSSLLAVHLAVEALHRGDCSMAMAVGSNLILSPTPFIADSATGMLSPTGRSRMWDESADGYARGEGVAAVVLKRLSDALADGDEIECLIRATAANADGRTMGITMPNGNAQQELIHNTYTKAGLDPKNSEGRCQYFEAHGTGTQAGDPQEAGAIFNAFFGDSPTTDLKAEEKLYVGSIKTVIGHTEATAGLAGLIKASLCLQHSEIVPNMLLERLNPKLSSFMSCLHVPTENMPWPKLPAGAPRRASVNSFGFGGANVHAILESYDAPATSPPTHSLPFILPFTFSAASERSLGAVLQQHGRYLQDAKEEHLLDLAATLGNRRSVFSHRVNLTASSLEDLRSKVQHEIEQNTTEYSSTVICRSKARSHSVLGVFTGQGAQWPQMGLDLIMACPEARMWIDEMQESLNRLPAEYRPNFVMMDELSKPKDKSRVHEAAISQPLRTAIQIIQVNFLRALGISFTAVVGHSSGEVAAAYAAGLLNSSDAIRIAYLRGNVAKYAGSTGQQGAMMAVGLSGGDADAICSQESYVGRVSVAAYNSPSSVTLSGDQDVLTELEWLLRSLGRQVKVLRVDTAYHSHHMLPCAEPYLKALKKCNISIQRPQTSRWFSSVFNGREMMSDDDSLQGEYWKENMVHSVEFSQAMAMAVDQISGPDLIMEVGPHPALKGPAIETLSTIQTDTQIPYIGLTKRDSSSIECFAAAIGSLWTYLESGCMDLPKYVSLFDPAYHLKFVKDLPSYPFDHREQFWAESRLSKAVSHRSNPPNCLLGVLSPDSGKEEQVWRGYLRRDSLQWLIGYEIRSLPLFPPSGYISLALESAKLIAGQEQLQLLEVQDLAIENDLPIADNTTGVEIVFKVGSLRTNGKHIHGTFNCQAGVSGKLISCASGVLTMTLGSADAAALPARRSSLPDMRAVDIEDFYSALTRLGHLYSEDFKCLKALSRRRDGACGSALNSIERKPGSPLLHPATAETSFQVLMAALENPSNSQSSILYRPTLIRRTVINLALCDSPELMLDASILHVEPEGIHGVVDVFNSTGQGVMQLEGVHLVPLLEDLADVHSATLFSETVWGPVKLDATLGASDCAPNVASSLELRERLTFLHLRNIGDQLSLKARQNLDKPRAFFVAWMDHVLAAVRDNDHPTCRSEWLGENLQHFLSIDHGLHQSELLAMDKICRSISARLLCMGDTQEDVFVNEALAEYYQTSREFSSLCDRLVKVVGQILFLFPRLNVLEVRRGTDLVTKRLLREFGHAFHSYTCTDTSDVPPARKESQNAQSKRLISYTSLDLCDDIVVQGYQEHSQDLVVITNSGHGSCSLPVTISNMRRLLKPGGYIVIIETTNPTLVYPKFFSGTPQNWKESVRTRSEWNTLLLSGGFSGIDTANPAHEAAILNMSLFVSQAVDDQIQLLRSPLSMCSAVANQDLFFVCETNDDMEPLRNSLYGLLKPRFNHIVSAENLDAMEFEGFCAPTVLVLTYKNDSWFQTITNEQCRASIQKTFKAAGKLLWVTVDAQVDPYRAMTNGMLRSISLEYPSVTFQHLEIPNPNAVSFKILATALMRLVHTKFENNCRLSGVVTATEPEVRYVDGAFLVPRQQTSSFPNKRYLAHTHVVDGDVGIEHILIEPTKPERLDSPVRVVAHSTTSSYSPQSPRVTLRVQYSTLRAVRVDTAGYLYLVVGRDVQSQSRFLAVTDKNAGLISIDVLRTRPIPSWIPEGQEDDLLLFITCALIAEQILSEVHPGTSLLVHEPDSALYQALATAAPLHMIEVFFSTSKSPPANGMMFIHKNVSSLALSRQLPSDLSVIAASASSSGTLFRRATSLLRKDIRQVDIDNFFRASPQTRQVQVSDLRGIAHALKQTRALHDTRASVTEVDAISGHPGALDNLEIVDWTASKPIPAQIRSASSHVSLSAAKSYLLLAMQKDLAVSVSEWMVARGARHVVLAGTASDINVDKGWVEEMASRGACIHCLPTDISERQSVLLLERFTCALPPAGGIIYGALARLPADNLFPMARQNRDVSPITSLLESSILLDELYNHPAMDFFIFVGSLSGQFNHANMVECAAASEFSSALIRRRRSRSFSGSIVFMSQIPDPKSESKFLGEKYLSEHDLDEVFAESILAGDPNSTGNHEITAGLRPIKPEHTEMSWNRIPKMWNFVQHLAEFNSVSPSHSEVITMSVLLERATSQREVTEILTSHLLTQLRTKLGLSTEAVLVPETQLSELGVDSLVAADLRTWFLKELSVDVPILFMLSGSSIQEITSSAAAKLDASRIPHAQ.

The Ketosynthase family 3 (KS3) domain maps to 5-442; the sequence is IEPIAIVGTG…GANVHAILES (438 aa). Residues cysteine 178, histidine 317, and histidine 362 each act as for beta-ketoacyl synthase activity in the active site. Residues 550–885 form a malonyl-CoA:ACP transacylase (MAT) domain region; the sequence is GVFTGQGAQW…AAIGSLWTYL (336 aa). Residue serine 645 is the For acyl/malonyl transferase activity of the active site. The segment at 940–1070 is N-terminal hotdog fold; that stretch reads NCLLGVLSPD…GVLTMTLGSA (131 aa). The PKS/mFAS DH domain maps to 940-1231; it reads NCLLGVLSPD…LVPLLEDLAD (292 aa). The product template (PT) domain stretch occupies residues 989–1497; that stretch reads ALESAKLIAG…SLPVTISNMR (509 aa). The interval 1085-1231 is C-terminal hotdog fold; it reads MRAVDIEDFY…LVPLLEDLAD (147 aa). A methyltransferase (CMeT) domain region spans residues 1771–2159; the sequence is NKRYLAHTHV…LERFTCALPP (389 aa). The Carrier domain maps to 2359–2434; that stretch reads EILTSHLLTQ…EITSSAAAKL (76 aa). Serine 2394 bears the O-(pantetheine 4'-phosphoryl)serine mark.

The enzyme catalyses nicotinyl-CoA + 2 malonyl-CoA + H(+) = 4-hydroxy-6-(pyridin-3-yl)-2H-pyran-2-one + 2 CO2 + 3 CoA. The protein operates within secondary metabolite biosynthesis; terpenoid biosynthesis. Its function is as follows. Non-reducing polyketide synthase; part of the gene cluster that mediates the biosynthesis of 15-deoxyoxalicine B. The first step of the pathway is the synthesis of nicotinyl-CoA from nicotinic acid by the nicotinic acid-CoA ligase olcI. Nicotinyl-CoA is then a substrate of polyketide synthase olcA to produce 4-hydroxy-6-(3-pyridinyl)-2H-pyran-2-one (HPPO) which is further prenylated by the polyprenyl transferase olcH to yield geranylgeranyl-HPPO. Geranylgeranyl pyrophosphate is provided by the cluster-specific geranylgeranyl pyrophosphate synthase olcC. The FAD-dependent monooxygenase olcE catalyzes the epoxidation of geranylgeranyl-HPPO and the terpene cyclase olcD catalyzes the cyclization of the terpenoid component, resulting in the formation of the tricyclic terpene moiety seen in predecaturin E. The cytochrome P450 monooxygenase then catalyzes the allylic oxidation of predecaturin E, which is followed by spirocylization with concomitant loss of one molecule of water to form decaturin E. Decaturin E is the substrate of the cytochrome P450 monooxygenase olcJ which hydroxylates it at the C-29 position to form decaturin F. The short-chain dehydrogenase/reductase olcF may catalyze the oxidation of decaturin F to generate the 29-hydroxyl-27-one intermediate, and subsequent hemiacetal formation probably leads to the formation of decaturin C. The dioxygenase olcK may be a peroxisomal enzyme that catalyzes the hydroxylation of decaturin C into decaturin A once decaturin C is shuttled into the peroxisome by the MFS transporter olcL. Finally the cytochrome P450 monooxygenase olcB catalyzes the oxidative rearrangement to yield 15-deoxyoxalicine B. In the absence of olcJ, decaturin E may be shunted to a pathway in which it is oxidized to a ketone, possibly by olcF, to form decaturin D, which undergoes further allylic oxidation to yield decaturin G. Moreover, in the absence of oclK or oclL, oclB can convert decaturin C into 15-deoxyoxalicine A. The chain is Non-reducing polyketide synthase olcA from Penicillium canescens.